A 369-amino-acid polypeptide reads, in one-letter code: Aminomethyltransferase (369 aa).

It belongs to the GcvT family. In terms of assembly, the glycine cleavage system is composed of four proteins: P, T, L and H.

It carries out the reaction N(6)-[(R)-S(8)-aminomethyldihydrolipoyl]-L-lysyl-[protein] + (6S)-5,6,7,8-tetrahydrofolate = N(6)-[(R)-dihydrolipoyl]-L-lysyl-[protein] + (6R)-5,10-methylene-5,6,7,8-tetrahydrofolate + NH4(+). Its function is as follows. The glycine cleavage system catalyzes the degradation of glycine. The protein is Aminomethyltransferase of Xanthomonas oryzae pv. oryzae (strain PXO99A).